The following is a 294-amino-acid chain: tRNA dimethylallyltransferase (294 aa).

ATP is bound at residue 10–17 (GPTAVGKT). 12 to 17 (TAVGKT) provides a ligand contact to substrate. The tract at residues 35–38 (DSQQ) is interaction with substrate tRNA.

This sequence belongs to the IPP transferase family. Monomer. It depends on Mg(2+) as a cofactor.

The enzyme catalyses adenosine(37) in tRNA + dimethylallyl diphosphate = N(6)-dimethylallyladenosine(37) in tRNA + diphosphate. Functionally, catalyzes the transfer of a dimethylallyl group onto the adenine at position 37 in tRNAs that read codons beginning with uridine, leading to the formation of N6-(dimethylallyl)adenosine (i(6)A). In Streptococcus pneumoniae serotype 2 (strain D39 / NCTC 7466), this protein is tRNA dimethylallyltransferase.